The chain runs to 119 residues: Small ribosomal subunit protein uS10 (119 aa).

N-acetylalanine is present on Ala2. Lys4 is covalently cross-linked (Glycyl lysine isopeptide (Lys-Gly) (interchain with G-Cter in ubiquitin)). Position 8 is an N6-succinyllysine; alternate (Lys8). Residue Lys8 forms a Glycyl lysine isopeptide (Lys-Gly) (interchain with G-Cter in ubiquitin); alternate linkage. A Phosphothreonine modification is found at Thr9. N6-acetyllysine is present on residues Lys34 and Lys75. The residue at position 93 (Ser93) is a Phosphoserine.

This sequence belongs to the universal ribosomal protein uS10 family. As to quaternary structure, component of the 40S small ribosomal subunit. Polyubiquitinated by ZNF598 via 'Lys-63'-linked ubiquitin chains when a ribosome has stalled, initiating the ribosome quality control (RQC) pathway to degrade the potentially detrimental aberrant nascent polypeptide. Deubiquitinated by OTUD3 and USP21, antagonizing ZNF598 activity. In terms of processing, ufmylated by UFL1.

The protein localises to the cytoplasm. Component of the small ribosomal subunit. The ribosome is a large ribonucleoprotein complex responsible for the synthesis of proteins in the cell. This chain is Small ribosomal subunit protein uS10 (Rps20), found in Rattus norvegicus (Rat).